Consider the following 323-residue polypeptide: Cysteine synthase A (323 aa).

Hydrogen sulfide-binding residues include N8 and R35. K42 bears the N6-(pyridoxal phosphate)lysine mark. Pyridoxal 5'-phosphate contacts are provided by residues N72 and 177-181; that span reads GTGGT. L269 lines the hydrogen sulfide pocket. S273 provides a ligand contact to pyridoxal 5'-phosphate.

Belongs to the cysteine synthase/cystathionine beta-synthase family. As to quaternary structure, homodimer. Requires pyridoxal 5'-phosphate as cofactor.

The catalysed reaction is O-acetyl-L-serine + hydrogen sulfide = L-cysteine + acetate. It functions in the pathway amino-acid biosynthesis; L-cysteine biosynthesis; L-cysteine from L-serine: step 2/2. The sequence is that of Cysteine synthase A (cysK) from Escherichia coli O157:H7.